A 160-amino-acid chain; its full sequence is Cytochrome c-type biogenesis protein CcmE (160 aa).

Residues 1–8 (MSAPRKTR) are Cytoplasmic-facing. Residues 9–29 (LYAILAVVCGAVLTIALMLYA) form a helical; Signal-anchor for type II membrane protein membrane-spanning segment. Over 30 to 160 (LSSNIDLFYT…PAAGPEGKRL (131 aa)) the chain is Periplasmic. The heme site is built by histidine 130 and tyrosine 134.

The protein belongs to the CcmE/CycJ family.

The protein localises to the cell inner membrane. In terms of biological role, heme chaperone required for the biogenesis of c-type cytochromes. Transiently binds heme delivered by CcmC and transfers the heme to apo-cytochromes in a process facilitated by CcmF and CcmH. In Pectobacterium atrosepticum (strain SCRI 1043 / ATCC BAA-672) (Erwinia carotovora subsp. atroseptica), this protein is Cytochrome c-type biogenesis protein CcmE.